Here is a 357-residue protein sequence, read N- to C-terminus: tRNA-specific 2-thiouridylase MnmA (357 aa).

ATP contacts are provided by residues 7–14 (GLSGGVDS) and L33. C94 serves as the catalytic Nucleophile. A disulfide bridge connects residues C94 and C193. G119 provides a ligand contact to ATP. An interaction with tRNA region spans residues 143-145 (KDQ). C193 acts as the Cysteine persulfide intermediate in catalysis. Residues 298–299 (RY) form an interaction with tRNA region.

Belongs to the MnmA/TRMU family.

It localises to the cytoplasm. It carries out the reaction S-sulfanyl-L-cysteinyl-[protein] + uridine(34) in tRNA + AH2 + ATP = 2-thiouridine(34) in tRNA + L-cysteinyl-[protein] + A + AMP + diphosphate + H(+). Its function is as follows. Catalyzes the 2-thiolation of uridine at the wobble position (U34) of tRNA, leading to the formation of s(2)U34. The chain is tRNA-specific 2-thiouridylase MnmA from Synechococcus sp. (strain ATCC 27144 / PCC 6301 / SAUG 1402/1) (Anacystis nidulans).